Reading from the N-terminus, the 1235-residue chain is ATP-dependent helicase/nuclease subunit A (1235 aa).

The region spanning Ser-12–Arg-482 is the UvrD-like helicase ATP-binding domain. Ala-33 to Thr-40 is a binding site for ATP. The UvrD-like helicase C-terminal domain occupies Ala-509–Gly-800.

This sequence belongs to the helicase family. AddA subfamily. In terms of assembly, heterodimer of AddA and AddB/RexB. Requires Mg(2+) as cofactor.

The enzyme catalyses Couples ATP hydrolysis with the unwinding of duplex DNA by translocating in the 3'-5' direction.. It catalyses the reaction ATP + H2O = ADP + phosphate + H(+). Its function is as follows. The heterodimer acts as both an ATP-dependent DNA helicase and an ATP-dependent, dual-direction single-stranded exonuclease. Recognizes the chi site generating a DNA molecule suitable for the initiation of homologous recombination. The AddA nuclease domain is required for chi fragment generation; this subunit has the helicase and 3' -&gt; 5' nuclease activities. This chain is ATP-dependent helicase/nuclease subunit A, found in Listeria monocytogenes serotype 4a (strain HCC23).